The chain runs to 492 residues: Ketol-acid reductoisomerase (NADP(+)) (492 aa).

One can recognise a KARI N-terminal Rossmann domain in the interval 15 to 208 (AQLGKCRFMA…GGHRAGVLES (194 aa)). NADP(+)-binding positions include 45–48 (CGAQ), R68, R76, S78, and 108–110 (DKQ). Residue H132 is part of the active site. G158 serves as a coordination point for NADP(+). 2 KARI C-terminal knotted domains span residues 209 to 344 (SFVA…NAPQ) and 345 to 485 (FEGK…MTDM). Residues D217, E221, E389, and E393 each coordinate Mg(2+). S414 provides a ligand contact to substrate.

It belongs to the ketol-acid reductoisomerase family. Mg(2+) is required as a cofactor.

The enzyme catalyses (2R)-2,3-dihydroxy-3-methylbutanoate + NADP(+) = (2S)-2-acetolactate + NADPH + H(+). It carries out the reaction (2R,3R)-2,3-dihydroxy-3-methylpentanoate + NADP(+) = (S)-2-ethyl-2-hydroxy-3-oxobutanoate + NADPH + H(+). Its pathway is amino-acid biosynthesis; L-isoleucine biosynthesis; L-isoleucine from 2-oxobutanoate: step 2/4. It participates in amino-acid biosynthesis; L-valine biosynthesis; L-valine from pyruvate: step 2/4. Its function is as follows. Involved in the biosynthesis of branched-chain amino acids (BCAA). Catalyzes an alkyl-migration followed by a ketol-acid reduction of (S)-2-acetolactate (S2AL) to yield (R)-2,3-dihydroxy-isovalerate. In the isomerase reaction, S2AL is rearranged via a Mg-dependent methyl migration to produce 3-hydroxy-3-methyl-2-ketobutyrate (HMKB). In the reductase reaction, this 2-ketoacid undergoes a metal-dependent reduction by NADPH to yield (R)-2,3-dihydroxy-isovalerate. In Yersinia pseudotuberculosis serotype O:3 (strain YPIII), this protein is Ketol-acid reductoisomerase (NADP(+)).